The primary structure comprises 100 residues: Succinate dehydrogenase assembly factor 4, mitochondrial (100 aa).

The N-terminal 31 residues, 1–31, are a transit peptide targeting the mitochondrion; it reads MFNRNLRAVILKNYNKALTRCLHDAGNLKRP. The segment at 24–100 is disordered; sequence DAGNLKRPTP…YSYEGRVTDF (77 aa). 2 stretches are compositionally biased toward basic and acidic residues: residues 36-68 and 85-100; these read LPKE…KDFE and PTVH…VTDF.

This sequence belongs to the SDHAF4 family. Interacts with sdh1 in its FAD-bound form.

It is found in the mitochondrion matrix. In terms of biological role, plays an essential role in the assembly of succinate dehydrogenase (SDH), an enzyme complex (also referred to as respiratory complex II) that is a component of both the tricarboxylic acid (TCA) cycle and the mitochondrial electron transport chain, and which couples the oxidation of succinate to fumarate with the reduction of ubiquinone (coenzyme Q) to ubiquinol. Binds to the flavoprotein subunit sdh1 in its FAD-bound form, blocking the generation of excess reactive oxygen species (ROS) and facilitating its assembly with the iron-sulfur protein subunit sdh2 into the SDH catalytic dimer. The sequence is that of Succinate dehydrogenase assembly factor 4, mitochondrial from Schizosaccharomyces pombe (strain 972 / ATCC 24843) (Fission yeast).